Here is a 229-residue protein sequence, read N- to C-terminus: uncharacterized protein (229 aa).

The 55-residue stretch at leucine 24–arginine 78 folds into the HTH cro/C1-type domain. A DNA-binding region (H-T-H motif) is located at residues glutamine 35–serine 54.

This is an uncharacterized protein from Archaeoglobus fulgidus (strain ATCC 49558 / DSM 4304 / JCM 9628 / NBRC 100126 / VC-16).